The sequence spans 419 residues: MANGAGNGGGGAGGNGGGGNNGAGNRAEELQPHPVKEQLPGIQYCVNSPPPWLEAVVLGFQHYLLSLGITVLIPSLLVPLMGGGDAEKVKVIQTLLFVSGLTTLFQSFFGTRLPVIASASYAYIIPITSIIYSTRFTYYTDPFERFVRTMRSIQGALIITGCFQVLVCFLGVWRNIVRFLSPLSIAPLVTFTGLGLYHIGFPLVKKGPMIWDGNRCDRYGMMLCIPVVWLFAQLLTSSGVYDHKPQTTQTSCRTDRTGLITNTPCPTFDITDSFAMMAASFVTLFESTGLFYASARYGKNVGLLAMTKVGSRRVIQISAAFMLFFSIFGKFGAFFASIPLPIMASLYCIVLCFVSSAGLSFLQFCNLNSFNTKFILGFSFFMAISIPQYFREYYNGVGRCDKSDIHVTYNGCGNNCDSA.

The segment covering Met1 to Gly22 has biased composition (gly residues). Residues Met1–Glu28 form a disordered region. 10 helical membrane passes run Leu64–Gly84, Val91–Thr111, Leu113–Ser133, Ile153–Trp173, Ser184–Val204, Gly220–Val240, Ser273–Ala293, Arg313–Ala333, Phe334–Val354, and Phe370–Phe390.

The protein belongs to the nucleobase:cation symporter-2 (NCS2) (TC 2.A.40) family.

Its subcellular location is the membrane. This chain is Putative nucleobase-ascorbate transporter 9 (NAT9), found in Arabidopsis thaliana (Mouse-ear cress).